Here is a 518-residue protein sequence, read N- to C-terminus: MARAKRVKRDSVTHIYQTCKQAGTCPPDVINKVEQTTVADNILKYGSAGVFFGGLGISTGRGTGGATGYVPLGEGPGVRVGGTPTVVRPSLVPETVGPVDILPIDTVNPVEPTASSVVPLTESTGADLLPGEVETIAEIHPVPEGPSVDTPVVTTSTGSSAVLEVAPEPIPPTRVRVSRTHYHNPSFQIITESTPAQGESSLADHVLVTSGSGGQQIGGDITDIIELEEIPSRYTFEIEEPTPPRRSSTPLPRNQSVGRRRGFSLTNRRLVQQVQVDNPLFLTQPSKLVRFAFDNPVFEEEVTNIFENDLDVFEEPPDRDFLDVRELRRPQYSTTPAGYVRVSRLGTRATIRTRSGAQIGSQVHFYRDLSSINTEDPIELQLLGQHSGDATIVQGPVESTFIDMDISENPLSESIEAYSHDLLLDEAVEDFSGSQLVIGNRRSTNSYTVPRFETTRNGSYYTQDTKGYYVAYPESRNNAEIIYPTPDIPVVIIHTHDNTGDFYLHPSLRRRKRKRKYL.

The Nuclear localization signal signature appears at 1-10 (MARAKRVKRD). A disulfide bond links C19 and C25. The segment at 238-260 (IEEPTPPRRSSTPLPRNQSVGRR) is disordered. The Nuclear localization signal signature appears at 510-517 (RRKRKRKY).

The protein belongs to the papillomaviridae L2 protein family. In terms of assembly, interacts with major capsid protein L1. Interacts with E2; this interaction inhibits E2 transcriptional activity but not the DNA replication function E2. Interacts with host GADD45GIP1. Interacts with host HSPA8; this interaction is required for L2 nuclear translocation. Interacts with host importins KPNB2 and KPNB3. Forms a complex with importin alpha2-beta1 heterodimers via interaction with the importin alpha2 adapter. Interacts with host DYNLT1; this interaction is essential for virus intracellular transport during entry. Interacts (via C-terminus) with host retromer subunits VPS35 and VPS29. Highly phosphorylated.

The protein localises to the virion. It localises to the host nucleus. It is found in the host early endosome. The protein resides in the host Golgi apparatus. In terms of biological role, minor protein of the capsid that localizes along the inner surface of the virion, within the central cavities beneath the L1 pentamers. Plays a role in capsid stabilization through interaction with the major capsid protein L1. Once the virion enters the host cell, L2 escorts the genomic DNA into the nucleus by promoting escape from the endosomal compartments and traffic through the host Golgi network. Mechanistically, the C-terminus of L2 possesses a cell-penetrating peptide that protudes from the host endosome, interacts with host cytoplasmic retromer cargo and thereby mediates the capsid delivery to the host trans-Golgi network. Plays a role through its interaction with host dynein in the intracellular microtubule-dependent transport of viral capsid toward the nucleus. Mediates the viral genome import into the nucleus through binding to host importins. Once within the nucleus, L2 localizes viral genomes to host PML bodies in order to activate early gene expression for establishment of infection. Later on, promotes late gene expression by interacting with the viral E2 protein and by inhibiting its transcriptional activation functions. During virion assembly, encapsidates the genome by direct interaction with the viral DNA. This is Minor capsid protein L2 from Homo sapiens (Human).